A 72-amino-acid polypeptide reads, in one-letter code: Translation initiation factor IF-1 (72 aa).

In terms of domain architecture, S1-like spans 1–72 (MAKEDCIEMQ…SKARIIFRAR (72 aa)).

It belongs to the IF-1 family. Component of the 30S ribosomal translation pre-initiation complex which assembles on the 30S ribosome in the order IF-2 and IF-3, IF-1 and N-formylmethionyl-tRNA(fMet); mRNA recruitment can occur at any time during PIC assembly.

Its subcellular location is the cytoplasm. Its function is as follows. One of the essential components for the initiation of protein synthesis. Stabilizes the binding of IF-2 and IF-3 on the 30S subunit to which N-formylmethionyl-tRNA(fMet) subsequently binds. Helps modulate mRNA selection, yielding the 30S pre-initiation complex (PIC). Upon addition of the 50S ribosomal subunit IF-1, IF-2 and IF-3 are released leaving the mature 70S translation initiation complex. In Actinobacillus pleuropneumoniae serotype 5b (strain L20), this protein is Translation initiation factor IF-1.